Here is a 1002-residue protein sequence, read N- to C-terminus: Leucine-rich repeat receptor-like serine/threonine-protein kinase BAM2 (1002 aa).

An N-terminal signal peptide occupies residues 1 to 22 (MKLLLLLLLLLLLHISHSFTVA). Residues 23–636 (KPITELHALL…SHVKPLSATT (614 aa)) lie on the Extracellular side of the membrane. Asn-51, Asn-80, Asn-97, Asn-123, Asn-130, Asn-153, and Asn-164 each carry an N-linked (GlcNAc...) asparagine glycan. 22 LRR repeats span residues 68-92 (LRHV…VAHL), 93-116 (PLLQ…ISNL), 118-140 (ELRH…LSSG), 141-165 (LVNL…LTNL), 167-188 (QLRH…TYGT), 189-213 (WPVL…IGNL), 215-238 (TLRE…IGNL), 239-262 (SELV…IGKL), 263-285 (QKLD…ELGL), 286-309 (ISSL…SFSQ), 311-334 (KNLT…IGEM), 335-358 (PELE…LGEN), 359-382 (GRLV…MCSG), 384-406 (RLMT…LGKC), 407-430 (ESLT…LFGL), 431-456 (PKLS…GVSG), 458-479 (LGQI…IGNL), 480-503 (SGVQ…IGRL), 505-527 (QLSK…ISRC), 528-551 (KLLT…LTGM), 552-575 (KILN…IASM), and 577-600 (SLTS…QFSY). N-linked (GlcNAc...) asparagine glycosylation is found at Asn-212 and Asn-237. Residues Asn-312 and Asn-346 are each glycosylated (N-linked (GlcNAc...) asparagine). N-linked (GlcNAc...) asparagine glycosylation occurs at Asn-420. Asn-478 carries an N-linked (GlcNAc...) asparagine glycan. N-linked (GlcNAc...) asparagine glycans are attached at residues Asn-558, Asn-587, and Asn-602. The chain crosses the membrane as a helical span at residues 637–657 (KLLLVLGLLFCSMVFAIVAII). At 658–1002 (KARSLRNASE…SGSPPDLLSN (345 aa)) the chain is on the cytoplasmic side. Position 682 is a phosphothreonine (Thr-682). The 278-residue stretch at 690–967 (LKEDNIIGKG…VQILTEIPKI (278 aa)) folds into the Protein kinase domain. ATP contacts are provided by residues 696-704 (IGKGGAGIV) and Lys-718. Tyr-765 and Tyr-803 each carry phosphotyrosine. Catalysis depends on Asp-816, which acts as the Proton acceptor. Ser-851 bears the Phosphoserine mark. Residues Tyr-859 and Tyr-866 each carry the phosphotyrosine modification. Thr-867 bears the Phosphothreonine mark. The tract at residues 969-1002 (LSKQQAAESDVTEKAPAINESSPDSGSPPDLLSN) is disordered. The span at 989-1002 (SSPDSGSPPDLLSN) shows a compositional bias: low complexity.

It belongs to the protein kinase superfamily. Ser/Thr protein kinase family. Interacts with BAM1 and CLV1. Binds to the CLV3, CLE11, CLE18, CLE19, CLE22, CLE25, CLE26, CLE40, CLE41 and CLE42 mature peptides, probably via its extracellular leucine-rich repeat region. Expressed in seedlings, roots, rosette leaves, stems, inflorescences, flowers and siliques.

The protein localises to the cell membrane. It carries out the reaction L-seryl-[protein] + ATP = O-phospho-L-seryl-[protein] + ADP + H(+). The catalysed reaction is L-threonyl-[protein] + ATP = O-phospho-L-threonyl-[protein] + ADP + H(+). Its function is as follows. Necessary for male gametophyte development, as well as ovule specification and function. Involved in cell-cell communication process required during early anther development, and regulating cell division and differentiation to organize cell layers. Required for the development of high-ordered vascular strands within the leaf and a correlated control of leaf shape, size and symmetry. May regulate the CLV1-dependent CLV3-mediated signaling in meristems maintenance. The chain is Leucine-rich repeat receptor-like serine/threonine-protein kinase BAM2 (BAM2) from Arabidopsis thaliana (Mouse-ear cress).